Here is a 954-residue protein sequence, read N- to C-terminus: Kinesin-like protein KIN-14Q (954 aa).

A Calponin-homology (CH) domain is found at 33-155 (AMRRYDAASW…CVLALKSFSE (123 aa)). A Kinesin motor domain is found at 374–699 (NIRVYCRVRP…LKFAERVASV (326 aa)). 457 to 464 (GQTGSGKT) is a binding site for ATP. The stretch at 704 to 733 (AKANKEGSEVRELKEQIATLKAALAKKEGE) forms a coiled coil. A compositionally biased stretch (basic and acidic residues) spans 844–855 (YDPDKQRRRAEP). Disordered stretches follow at residues 844 to 876 (YDPDKQRRRAEPVETDDSDSFDAATSSPSDQEM) and 912 to 954 (PNLA…NTPK). The span at 864–873 (FDAATSSPSD) shows a compositional bias: low complexity. The span at 928–954 (PIRNSKQLPFSTTGGRRTRNGKINTPK) shows a compositional bias: polar residues.

The protein belongs to the TRAFAC class myosin-kinesin ATPase superfamily. Kinesin family. KIN-14 subfamily. Forms oligomers in vitro. Interacts with actin microfilaments. Binds to actin in vitro through its calponin-homology (CH) domain. Expressed in primary leaf, primary root, developing flower and coleoptile.

Its subcellular location is the cytoplasm. It is found in the cytoskeleton. The microtubule-dependent ATPase activity is regulated by actin binding. Its function is as follows. Minus end-directed motor protein that transports actin filaments along microtubules. Plays a central role in the polar orientation of actin filaments along microtubules, and thus a contribution to the organization of the cytoskeletal architecture. Links the actin microfilaments with the cortical microtubules in both cycling and non-cycling cells. Required for efficient cell elongation by its participation in the premitotic nuclear positioning. The chain is Kinesin-like protein KIN-14Q from Oryza sativa subsp. japonica (Rice).